Reading from the N-terminus, the 75-residue chain is UPF0154 protein SERP0914 (75 aa).

A helical membrane pass occupies residues 3–23 (IWVAIILIVIALIAGLIGGFL).

It belongs to the UPF0154 family.

The protein resides in the membrane. This is UPF0154 protein SERP0914 from Staphylococcus epidermidis (strain ATCC 35984 / DSM 28319 / BCRC 17069 / CCUG 31568 / BM 3577 / RP62A).